Here is a 247-residue protein sequence, read N- to C-terminus: Carboxy-S-adenosyl-L-methionine synthase (247 aa).

S-adenosyl-L-methionine contacts are provided by residues Y39, 64 to 66 (GCS), 89 to 90 (DN), 117 to 118 (DI), N132, and R199.

The protein belongs to the class I-like SAM-binding methyltransferase superfamily. Cx-SAM synthase family. In terms of assembly, homodimer.

It catalyses the reaction prephenate + S-adenosyl-L-methionine = carboxy-S-adenosyl-L-methionine + 3-phenylpyruvate + H2O. Its function is as follows. Catalyzes the conversion of S-adenosyl-L-methionine (SAM) to carboxy-S-adenosyl-L-methionine (Cx-SAM). In Citrobacter koseri (strain ATCC BAA-895 / CDC 4225-83 / SGSC4696), this protein is Carboxy-S-adenosyl-L-methionine synthase.